A 302-amino-acid polypeptide reads, in one-letter code: MTSPAALSPTPFGRVVTAMVTPFDDSGAVDLPLAGRLARHLVEQGSDGLVVSGTTGESPTLSWQEQLQLLQAVREAVGSDAQVLAGTGSNCTAEAVEATRQAAAAGADGALVVVPYYNKPPQDGLAAHFRAIAEAAPELPLMLYNIPGRTGCSMAPETVAQLMDCPNVVSFKAASGTTEEVTALRLACSSKLAIYSGDDGLTLPMISVGAVGVVSVASHVVGPQIRAMIDAYMQGDAAVALALHEQLQPVFKALFATTNPIPVKAALQLNGWSVGDPRPPLSPLPDDMRSTLAQTMAALRQT.

T55 is a binding site for pyruvate. Y144 (proton donor/acceptor) is an active-site residue. The active-site Schiff-base intermediate with substrate is the K172. Position 214 (V214) interacts with pyruvate.

This sequence belongs to the DapA family. As to quaternary structure, homotetramer; dimer of dimers.

The protein localises to the cytoplasm. It catalyses the reaction L-aspartate 4-semialdehyde + pyruvate = (2S,4S)-4-hydroxy-2,3,4,5-tetrahydrodipicolinate + H2O + H(+). It participates in amino-acid biosynthesis; L-lysine biosynthesis via DAP pathway; (S)-tetrahydrodipicolinate from L-aspartate: step 3/4. Functionally, catalyzes the condensation of (S)-aspartate-beta-semialdehyde [(S)-ASA] and pyruvate to 4-hydroxy-tetrahydrodipicolinate (HTPA). The polypeptide is 4-hydroxy-tetrahydrodipicolinate synthase (Parasynechococcus marenigrum (strain WH8102)).